Reading from the N-terminus, the 303-residue chain is Recombination-associated protein RdgC (303 aa).

The protein belongs to the RdgC family.

Its subcellular location is the cytoplasm. It is found in the nucleoid. Functionally, may be involved in recombination. In Aeromonas hydrophila subsp. hydrophila (strain ATCC 7966 / DSM 30187 / BCRC 13018 / CCUG 14551 / JCM 1027 / KCTC 2358 / NCIMB 9240 / NCTC 8049), this protein is Recombination-associated protein RdgC.